A 366-amino-acid chain; its full sequence is tRNA/tmRNA (uracil-C(5))-methyltransferase (366 aa).

Gln190, Tyr218, Asn223, Glu239, and Asp299 together coordinate S-adenosyl-L-methionine. Cys324 functions as the Nucleophile in the catalytic mechanism. The active-site Proton acceptor is Glu358.

It belongs to the class I-like SAM-binding methyltransferase superfamily. RNA M5U methyltransferase family. TrmA subfamily.

The catalysed reaction is uridine(54) in tRNA + S-adenosyl-L-methionine = 5-methyluridine(54) in tRNA + S-adenosyl-L-homocysteine + H(+). It carries out the reaction uridine(341) in tmRNA + S-adenosyl-L-methionine = 5-methyluridine(341) in tmRNA + S-adenosyl-L-homocysteine + H(+). In terms of biological role, dual-specificity methyltransferase that catalyzes the formation of 5-methyluridine at position 54 (m5U54) in all tRNAs, and that of position 341 (m5U341) in tmRNA (transfer-mRNA). The polypeptide is tRNA/tmRNA (uracil-C(5))-methyltransferase (Escherichia coli O17:K52:H18 (strain UMN026 / ExPEC)).